We begin with the raw amino-acid sequence, 969 residues long: MVVRRKVHVLLIARSFHSYTPCFRVTTRGKRQRSKSKQQAKVELDHTRELDNDQATETVVDRSVGPEKDIESINKDFLQRTKGLEPDIELKQLPQIKQEFNQRYKDRYVKPSEDWYVNSWRSLTKPKIPLYKLINSDFQLITKLKAPNPMEFQPVQLMESPLNVGDFVLLKMRPNELAMCVSLPSSTMDPRYTFVTIDGTMCFATKNRVLLRIPHKLPAGIHSLIQPESHHKHLPIGTVKNFSNQTNILPIVARQLITSRYPAQISKLAWKDLPITTKKLQLLHRSLQNYMGPWQIPFFTLVGLVQKLDLNKALDDKNGINYLTSLVNNYHTVNDIPINSPTFVSTYWAIMQQQESNLWGEIHLNTALLSPISVTIIPLKSQHLYYAQVIEKLEANSYREVNKFVKLVNERKYRDISALYPSVIQLLKDFAAGNFHNNGIIVALISKIFRKIERYKDCDITRDICQDLINEITPNSIPNPLLLNMDLALPASSKLVKWQQKLYDLTNIEELQWKKSGTDDDRYDFGDLRVFCIDSETAHEIDDGVSVKNYGRDGLYTLYIHIADPTSMFPESTNVDIEGISTDILNVALKRSFTTYLPDTVVPMLPQSICHLSDLGKQGQRTKTISFSVDVKITSKCSGKSIEIMYDSFKIRKGIVSNFPKATYEDVDRILGTPNSEASPVKKDLESLSMISKLLREQRIKNSNAVIFGEGFNKGLVMLNADSEGELTEVTFSDQEETLSTILVSEMMILANTLTGRYFAENKIGGVFRCYKQLPLGEVAQQQYDSMITSTKKGIFPKLKDIVKLSSLLNSSFYTGRPFRHEMIGAKQYLTVTSPLRRFPDLINHLQIHRHLQKKPLCFNQTQIDSLIWPIQSRADILKRASRNSSTYWTLNYLKKLTKLEPERTFDVMVTSVPQNGFTGCVFPDLSFARGTLKLHPSSMHYPMIGDIVKNCKISKIDCLEGMLELEKL.

The N-terminal 41 residues, 1–41 (MVVRRKVHVLLIARSFHSYTPCFRVTTRGKRQRSKSKQQAK), are a transit peptide targeting the mitochondrion. Residues 28–38 (RGKRQRSKSKQ) show a composition bias toward basic residues. A disordered region spans residues 28–54 (RGKRQRSKSKQQAKVELDHTRELDNDQ). Residues 40–51 (AKVELDHTRELD) are compositionally biased toward basic and acidic residues. The RNB domain maps to 522–853 (RYDFGDLRVF…NHLQIHRHLQ (332 aa)).

Belongs to the RNR ribonuclease family. As to quaternary structure, MSU1 and SUV3 are the two components of the mitochondrial degradosome (mtEXO).

It localises to the mitochondrion matrix. It catalyses the reaction Exonucleolytic cleavage in the 3'- to 5'-direction to yield nucleoside 5'-phosphates.. In terms of biological role, essential for mitochondrial biogenesis. Required for intron-independent turnover and processing of mitochondrial RNA. Participates in 3' mtRNA processing where it hydrolyzes single-stranded RNA or partially double-stranded RNA with 3' single-stranded tails. The sequence is that of Exoribonuclease II, mitochondrial (DSS1) from Saccharomyces cerevisiae (strain ATCC 204508 / S288c) (Baker's yeast).